A 493-amino-acid polypeptide reads, in one-letter code: 6-phosphogluconate dehydrogenase, decarboxylating (493 aa).

Residues 12 to 17, 35 to 37, 77 to 79, and asparagine 105 contribute to the NADP(+) site; these read GLAVMG, NRT, and VKA. Residues asparagine 105 and 131–133 contribute to the substrate site; that span reads SGG. Lysine 187 serves as the catalytic Proton acceptor. Position 190-191 (190-191) interacts with substrate; it reads HN. Glutamate 194 functions as the Proton donor in the catalytic mechanism. Substrate-binding residues include tyrosine 195, lysine 266, arginine 293, arginine 456, and histidine 462.

Belongs to the 6-phosphogluconate dehydrogenase family. Homodimer.

The catalysed reaction is 6-phospho-D-gluconate + NADP(+) = D-ribulose 5-phosphate + CO2 + NADPH. The protein operates within carbohydrate degradation; pentose phosphate pathway; D-ribulose 5-phosphate from D-glucose 6-phosphate (oxidative stage): step 3/3. Catalyzes the oxidative decarboxylation of 6-phosphogluconate to ribulose 5-phosphate and CO(2), with concomitant reduction of NADP to NADPH. The sequence is that of 6-phosphogluconate dehydrogenase, decarboxylating (gnd) from Dictyostelium discoideum (Social amoeba).